We begin with the raw amino-acid sequence, 297 residues long: Homoserine kinase (297 aa).

Position 85 to 95 (85 to 95 (PPTRGMGSSSA)) interacts with ATP.

Belongs to the GHMP kinase family. Homoserine kinase subfamily.

Its subcellular location is the cytoplasm. The catalysed reaction is L-homoserine + ATP = O-phospho-L-homoserine + ADP + H(+). Its pathway is amino-acid biosynthesis; L-threonine biosynthesis; L-threonine from L-aspartate: step 4/5. Functionally, catalyzes the ATP-dependent phosphorylation of L-homoserine to L-homoserine phosphate. This is Homoserine kinase from Desulfitobacterium hafniense (strain DSM 10664 / DCB-2).